The sequence spans 129 residues: Small ribosomal subunit protein uS11 (129 aa).

The protein belongs to the universal ribosomal protein uS11 family. As to quaternary structure, part of the 30S ribosomal subunit. Interacts with proteins S7 and S18. Binds to IF-3.

In terms of biological role, located on the platform of the 30S subunit, it bridges several disparate RNA helices of the 16S rRNA. Forms part of the Shine-Dalgarno cleft in the 70S ribosome. This Synechococcus sp. (strain RCC307) protein is Small ribosomal subunit protein uS11.